We begin with the raw amino-acid sequence, 464 residues long: MFKHLNALFIGLALFACTSGAVAQTIKPIETPVPVRPAGQKDVVGLTTPKLDVVRVGFIGLGMRGPGAVERFTHIPGTQIVALCDLIPERVAGAQKILTKANLPEAASYSGSEDAWKKLCERKDIDLVYIATDWKHHAQMAIYAMEHGKHVAIEVPSAMTLDEIWALINTSEKTRKHCMQLENCVYDFFELTTLNMAQQGVFGEVLHTEGAYIHNLEDFWPYYWNNWRMDYNQNHRGDVYATHGMGPACQLLDIHRGDKMNYLVSMDTKAVNGPAYIKKTTGKEVKDFQNGDQTSTLIRTEKGKTILIQHNVMTPRPYSRMYQVVGADGYASKYPIEEYCMRPTQIASNDVPNHEKLNAHGSVPADVKKALMDKYKHPIHKELEETAKKVGGHGGMDYIMDYRLVYCLRNGLPLDMDVYDLAEWCCMADLTKLSIENSSAPVAIPDFTRGAWNKVKGYRHAFAK.

The N-terminal stretch at 1 to 16 is a signal peptide; sequence MFKHLNALFIGLALFA. Cysteine 17 carries N-palmitoyl cysteine lipidation. Cysteine 17 carries S-diacylglycerol cysteine lipidation. Residues 63-64, aspartate 85, 134-137, 154-155, and asparagine 183 contribute to the NAD(+) site; these read MR, WKHH, and EV. Substrate-binding positions include tyrosine 212, arginine 228, 240–243, and tyrosine 318; that span reads YATH. Tyrosine 240 provides a ligand contact to NAD(+).

Belongs to the Gfo/Idh/MocA family. Glycosyl hydrolase 109 subfamily. Requires NAD(+) as cofactor.

Its subcellular location is the cell membrane. Glycosidase. Has no alpha-N-acetylgalactosaminidase activity. The polypeptide is Glycosyl hydrolase family 109 protein 1 (Bacteroides fragilis (strain ATCC 25285 / DSM 2151 / CCUG 4856 / JCM 11019 / LMG 10263 / NCTC 9343 / Onslow / VPI 2553 / EN-2)).